The following is a 319-amino-acid chain: Formimidoylglutamase (319 aa).

Mn(2+) is bound by residues His-131, Asp-154, His-156, Asp-158, Cys-248, and Asp-250.

It belongs to the arginase family. It depends on Mn(2+) as a cofactor.

It carries out the reaction N-formimidoyl-L-glutamate + H2O = formamide + L-glutamate. It functions in the pathway amino-acid degradation; L-histidine degradation into L-glutamate; L-glutamate from N-formimidoyl-L-glutamate (hydrolase route): step 1/1. Catalyzes the conversion of N-formimidoyl-L-glutamate to L-glutamate and formamide. The chain is Formimidoylglutamase from Legionella pneumophila (strain Paris).